The following is a 716-amino-acid chain: Mitogen-activated protein kinase kinase kinase 5 (716 aa).

Positions 1 to 27 (MRWLPQISFSSPSSSPSSSLKPVASYS) are enriched in low complexity. 4 disordered regions span residues 1-42 (MRWL…DRFH), 74-98 (ASTS…VPRS), 119-180 (AANA…YWVN), and 238-302 (YDIT…VTNG). The segment covering 31-40 (DPDRNQDRDR) has biased composition (basic and acidic residues). The span at 75 to 91 (STSSSTFDSGLTRSPSA) shows a compositional bias: polar residues. Over residues 124 to 137 (GLDDRDRDPERLIS) the composition is skewed to basic and acidic residues. Polar residues-rich tracts occupy residues 138-150 (DRTS…TSVN), 162-173 (ENSSYQDFSPRN), and 242-251 (AFSTDNSPIH). Positions 263–273 (RSPQPSRPSSP) are enriched in low complexity. One can recognise a Protein kinase domain in the interval 346–607 (WKKGKLIGRG…ASMLLEHRFL (262 aa)). ATP-binding positions include 352-360 (IGRGTFGSV) and K375. D472 acts as the Proton acceptor in catalysis. Polar residues predominate over residues 610–633 (SLQPTSPSNSDVSQLFNGMNITEP). Residues 610-716 (SLQPTSPSNS…RRTGVTSDHL (107 aa)) form a disordered region. Phosphoserine; by PBL27 is present on residues S617 and S622. Residues 634-648 (SSRREKPNFKLDQVP) show a composition bias toward basic and acidic residues. Composition is skewed to polar residues over residues 652-661 (NMTSSESESG) and 674-685 (LTGTVNRLSPRS). Phosphoserine; by PBL27 is present on residues S658 and S660. The residue at position 677 (T677) is a Phosphothreonine; by PBL27. S685 bears the Phosphoserine; by PBL27 mark. Over residues 703–716 (SSDRRRTGVTSDHL) the composition is skewed to basic and acidic residues.

The protein belongs to the protein kinase superfamily. STE Ser/Thr protein kinase family. MAP kinase kinase kinase subfamily. Interacts with PBL27 at the plasma membrane; disassociation is induced by chitin perception by the CERK1 complex. Interacts with MKK2, MKK4, and MKK5 mainly in the cytosol. Phosphorylated by PBL27 during chitin-mediated signaling in a CERK1-dependent manner. As to expression, mostly expressed in flower buds. Also present in pollen, roots, leaves and seedlings, and, at low levels, in stems and immature siliques.

Its subcellular location is the cell membrane. The protein localises to the cytoplasm. It is found in the cytosol. It catalyses the reaction L-seryl-[protein] + ATP = O-phospho-L-seryl-[protein] + ADP + H(+). The catalysed reaction is L-threonyl-[protein] + ATP = O-phospho-L-threonyl-[protein] + ADP + H(+). Its function is as follows. Mitogen-activated protein kinase (MAPK) involved in the transduction of signal between the host cell surface chitin receptor complex CERK1-LYK5 and the intracellular MAPK cascade that leads to chitin-induced immunity. Phosphorylates and activates MAPK targets (e.g. MKK4, MKK5, and possibly MKK2) when phosphorylated by PBL27 after elicitation by chitin. Required for resistance to the fungus A.brassicicola. The protein is Mitogen-activated protein kinase kinase kinase 5 of Arabidopsis thaliana (Mouse-ear cress).